Here is a 446-residue protein sequence, read N- to C-terminus: Iron-sulfur cluster assembly SufBD family protein PH1385 (446 aa).

Belongs to the iron-sulfur cluster assembly SufBD family.

The polypeptide is Iron-sulfur cluster assembly SufBD family protein PH1385 (Pyrococcus horikoshii (strain ATCC 700860 / DSM 12428 / JCM 9974 / NBRC 100139 / OT-3)).